Here is a 105-residue protein sequence, read N- to C-terminus: MKLSQPLSIFAILAASTVAVAVPQDDACAQCLTEGTFCEGFAGPVGTCCDGLVCENAPGVADDAHCIRKKKCLAKGETCVSIAGPVGTCCTGKCTFVAPDYSVCK.

The first 21 residues, 1–21, serve as a signal peptide directing secretion; the sequence is MKLSQPLSIFAILAASTVAVA.

Interacts with Arabidopsis thaliana PGIP1.

It is found in the secreted. Effector protein required for full virulence. Directly interacts with and functionally inactivates PG-inhibiting proteins (PGIPs). PGIPs are a defense mechanism of infected plants, that inhibit the plant pathogens secreted polygalacturonases (PGs) used to degrade the plant cell wall. Excerts its function by interacting with host PGIPs to negate their polygalacturonase-inhibiting function via enhanced dissociation of PGIPs from PGs. The polypeptide is Secreted effector protein PINE1 (Sclerotinia sclerotiorum (strain ATCC 18683 / 1980 / Ss-1) (White mold)).